The primary structure comprises 204 residues: Somatotropin (204 aa).

The first 17 residues, 1–17 (MDRAILLLSVVCLVVSS), serve as a signal peptide directing secretion. A Pyrrolidone carboxylic acid modification is found at Gln18. Zn(2+) is bound at residue His36. Cys69 and Cys177 are joined by a disulfide. Zn(2+) is bound at residue Glu186. An intrachain disulfide couples Cys194 to Cys202.

It belongs to the somatotropin/prolactin family.

The protein localises to the secreted. Growth hormone plays an important role in growth control and is involved in the regulation of several anabolic processes. Implicated as an osmoregulatory substance important for seawater adaptation. The chain is Somatotropin (gh) from Odontesthes argentinensis (Marine silverside).